A 400-amino-acid chain; its full sequence is Elongation factor Tu (400 aa).

Residues 10 to 209 (KPHVNIGTIG…NVDAYIPTPE (200 aa)) form the tr-type G domain. A G1 region spans residues 19 to 26 (GHVDHGKT). 19 to 26 (GHVDHGKT) is a GTP binding site. Residue T26 participates in Mg(2+) binding. Residues 60–64 (GITIN) form a G2 region. A G3 region spans residues 81 to 84 (DCPG). GTP-binding positions include 81–85 (DCPGH) and 136–139 (NKSD). The G4 stretch occupies residues 136–139 (NKSD). The segment at 174–176 (SGL) is G5.

This sequence belongs to the TRAFAC class translation factor GTPase superfamily. Classic translation factor GTPase family. EF-Tu/EF-1A subfamily. Monomer.

The protein localises to the cytoplasm. It catalyses the reaction GTP + H2O = GDP + phosphate + H(+). Functionally, GTP hydrolase that promotes the GTP-dependent binding of aminoacyl-tRNA to the A-site of ribosomes during protein biosynthesis. The protein is Elongation factor Tu of Desulforamulus reducens (strain ATCC BAA-1160 / DSM 100696 / MI-1) (Desulfotomaculum reducens).